Reading from the N-terminus, the 635-residue chain is Phosphatidylserine decarboxylase proenzyme 3 (635 aa).

Residues 1–42 (MGNGNSTETKESRRSKMRKKIQNFRSRRRLSRPGSGSVSGLA) form a disordered region. Glycine 2 is lipidated: N-myristoyl glycine. Basic residues predominate over residues 15-31 (SKMRKKIQNFRSRRRLS). Residues 22 to 147 (QNFRSRRRLS…VVQEPDSTCK (126 aa)) form the C2 domain. 2 EF-hand domains span residues 180–210 (AKRILSIVDYDEDGKLSFSEFSDLMNAFGNV) and 211–246 (VAANKKEELFKAADLNGDGVVTIDELAALLAVQQEQ). Positions 188, 190, 192, 194, 199, 224, 226, 228, and 235 each coordinate Ca(2+). Catalysis depends on charge relay system; for autoendoproteolytic cleavage activity residues aspartate 442, histidine 498, and serine 586. Catalysis depends on serine 586, which acts as the Schiff-base intermediate with substrate; via pyruvic acid; for decarboxylase activity. Serine 586 carries the pyruvic acid (Ser); by autocatalysis modification.

This sequence belongs to the phosphatidylserine decarboxylase family. PSD-B subfamily. Eukaryotic type II sub-subfamily. Heterodimer of a large membrane-associated beta subunit and a small pyruvoyl-containing alpha subunit. Requires pyruvate as cofactor. Post-translationally, is synthesized initially as an inactive proenzyme. Formation of the active enzyme involves a self-maturation process in which the active site pyruvoyl group is generated from an internal serine residue via an autocatalytic post-translational modification. Two non-identical subunits are generated from the proenzyme in this reaction, and the pyruvate is formed at the N-terminus of the alpha chain, which is derived from the carboxyl end of the proenzyme. The autoendoproteolytic cleavage occurs by a canonical serine protease mechanism, in which the side chain hydroxyl group of the serine supplies its oxygen atom to form the C-terminus of the beta chain, while the remainder of the serine residue undergoes an oxidative deamination to produce ammonia and the pyruvoyl prosthetic group on the alpha chain. During this reaction, the Ser that is part of the protease active site of the proenzyme becomes the pyruvoyl prosthetic group, which constitutes an essential element of the active site of the mature decarboxylase. Expressed in roots, leaves, stems and flowers.

Its subcellular location is the endoplasmic reticulum membrane. The enzyme catalyses a 1,2-diacyl-sn-glycero-3-phospho-L-serine + H(+) = a 1,2-diacyl-sn-glycero-3-phosphoethanolamine + CO2. It participates in phospholipid metabolism; phosphatidylethanolamine biosynthesis; phosphatidylethanolamine from CDP-diacylglycerol: step 2/2. Its function is as follows. Catalyzes the formation of phosphatidylethanolamine (PtdEtn) from phosphatidylserine (PtdSer). Plays a central role in phospholipid metabolism and in the interorganelle trafficking of phosphatidylserine. Contributes only to a minor proportion of PtdEtn production. The sequence is that of Phosphatidylserine decarboxylase proenzyme 3 (PSD3) from Arabidopsis thaliana (Mouse-ear cress).